The primary structure comprises 42 residues: MDNILDPLKAPFSSEAAAKTTAAKIAVVYALVGLVGGLLLTK.

A helical membrane pass occupies residues 20-40; sequence TTAAKIAVVYALVGLVGGLLL.

It localises to the virion membrane. Involved in cell lysis. The protein is Envelope protein P10 (P10) of Pseudomonas savastanoi pv. phaseolicola (Pseudomonas syringae pv. phaseolicola).